Reading from the N-terminus, the 296-residue chain is Ribosomal RNA small subunit methyltransferase H (296 aa).

S-adenosyl-L-methionine is bound by residues 38 to 40 (GAH), Glu-57, Phe-88, Asp-103, and His-110.

The protein belongs to the methyltransferase superfamily. RsmH family.

It is found in the cytoplasm. It catalyses the reaction cytidine(1402) in 16S rRNA + S-adenosyl-L-methionine = N(4)-methylcytidine(1402) in 16S rRNA + S-adenosyl-L-homocysteine + H(+). Functionally, specifically methylates the N4 position of cytidine in position 1402 (C1402) of 16S rRNA. This is Ribosomal RNA small subunit methyltransferase H from Borreliella afzelii (strain PKo) (Borrelia afzelii).